We begin with the raw amino-acid sequence, 258 residues long: Sugar fermentation stimulation protein homolog (258 aa).

It belongs to the SfsA family.

The chain is Sugar fermentation stimulation protein homolog from Marinomonas sp. (strain MWYL1).